The sequence spans 79 residues: Small ribosomal subunit protein bS18 (79 aa).

The protein belongs to the bacterial ribosomal protein bS18 family. As to quaternary structure, part of the 30S ribosomal subunit. Forms a tight heterodimer with protein bS6.

Functionally, binds as a heterodimer with protein bS6 to the central domain of the 16S rRNA, where it helps stabilize the platform of the 30S subunit. The protein is Small ribosomal subunit protein bS18 of Ureaplasma urealyticum serovar 10 (strain ATCC 33699 / Western).